Reading from the N-terminus, the 174-residue chain is Small ribosomal subunit protein bS16 (174 aa).

Positions 81–174 are disordered; that stretch reads QRFTGEPAPP…DATTDATPSA (94 aa). The span at 87 to 97 shows a compositional bias: pro residues; the sequence is PAPPPMKTAPP. Residues 98–118 are compositionally biased toward basic and acidic residues; sequence KPDKKALFEAAAKEAAGEPRA. Positions 135–158 are enriched in low complexity; sequence ETTPAAEAAPDAAASADEPAGGAS. Polar residues predominate over residues 160-174; that stretch reads AAESQDATTDATPSA.

The protein belongs to the bacterial ribosomal protein bS16 family.

The chain is Small ribosomal subunit protein bS16 from Acidothermus cellulolyticus (strain ATCC 43068 / DSM 8971 / 11B).